A 299-amino-acid chain; its full sequence is Aspartate carbamoyltransferase catalytic subunit (299 aa).

Residues Arg51 and Thr52 each coordinate carbamoyl phosphate. Lys80 is a binding site for L-aspartate. Positions 101, 129, and 132 each coordinate carbamoyl phosphate. Positions 162 and 221 each coordinate L-aspartate. Carbamoyl phosphate is bound by residues Leu260 and Pro261.

Belongs to the aspartate/ornithine carbamoyltransferase superfamily. ATCase family. In terms of assembly, heterooligomer of catalytic and regulatory chains.

It catalyses the reaction carbamoyl phosphate + L-aspartate = N-carbamoyl-L-aspartate + phosphate + H(+). It functions in the pathway pyrimidine metabolism; UMP biosynthesis via de novo pathway; (S)-dihydroorotate from bicarbonate: step 2/3. Its function is as follows. Catalyzes the condensation of carbamoyl phosphate and aspartate to form carbamoyl aspartate and inorganic phosphate, the committed step in the de novo pyrimidine nucleotide biosynthesis pathway. The chain is Aspartate carbamoyltransferase catalytic subunit from Sulfolobus acidocaldarius (strain ATCC 33909 / DSM 639 / JCM 8929 / NBRC 15157 / NCIMB 11770).